A 660-amino-acid polypeptide reads, in one-letter code: MSDSENEYDETDQLVKEEDEKMSDQRLTSEGADTSAEPKKKYDPKDPLRPRRKKARRACFACQRAHLTCGDERPCQRCIKRNLMESCQDGVRKKAKYLHDAPPEALRPVLGPNYNPNPTPRQNGHRHPSIQTSEASSNQGTFFSQSPATQFPLFSAAQTPIGNLAETLPFANQQSPTSPSFQTSGNPQISGMTVPQVSSPMTNFGTLPFDPSDPNIYNFNLEGLNFGSQYGAMEFGMLGHMSSGAAETPPGDATMARSASGSLGFGPGVFGNGVNQFDNVYEGNILDGFLGLDANHNGLYSQGNLQHGLPHAYAIAAGPTSIQSPSTDTNSPQPTPLGFEGSPTMATFSTTPGSKPANQQRPSTRQSNAIAKLGQQSVLGKRQRDPSFVYDTVKEPFGYVSSFHKLFILIQKRFTAAHTSRIAKSLASIRPSLMASTKNLTKQDLVFMEKYFQRSLLEYEEFMHQCSSPTLACRRTGEVAIVNKEFCALTGWTKDVLLGKEPNLNVNLGGSASANTNSKARVGLATPRLKSLNTESGGSTDGPRPVYLAELLDHESVVEFYEDYSQLAFNDSRGHKTRKCRLLKYRAPDKDDGTGESSTDGQLPQKDPRNSILSNRVAKIDGEHGISKLERDGKLECSYTWTIKRDVFDMPMLFVINVST.

Over residues 1-12 the composition is skewed to acidic residues; that stretch reads MSDSENEYDETD. The segment at 1-52 is disordered; the sequence is MSDSENEYDETDQLVKEEDEKMSDQRLTSEGADTSAEPKKKYDPKDPLRPRR. Composition is skewed to basic and acidic residues over residues 13 to 24 and 36 to 49; these read QLVKEEDEKMSD and AEPKKKYDPKDPLR. Residues 59 to 87 constitute a DNA-binding region (zn(2)-C6 fungal-type); sequence CFACQRAHLTCGDERPCQRCIKRNLMESC. 3 disordered regions span residues 98–144, 170–191, and 319–368; these read LHDA…TFFS, FANQQSPTSPSFQTSGNPQISG, and PTSI…RQSN. The span at 129 to 144 shows a compositional bias: polar residues; that stretch reads SIQTSEASSNQGTFFS. Low complexity predominate over residues 173–184; it reads QQSPTSPSFQTS. Polar residues-rich tracts occupy residues 320 to 332 and 344 to 368; these read TSIQSPSTDTNSP and TMATFSTTPGSKPANQQRPSTRQSN. The PAS domain maps to 455 to 526; that stretch reads SLLEYEEFMH…NSKARVGLAT (72 aa). Positions 587–613 are disordered; sequence APDKDDGTGESSTDGQLPQKDPRNSIL.

It belongs to the ERT1/acuK family.

The protein resides in the nucleus. Its function is as follows. Transcription factor which regulates nonfermentable carbon utilization. Activator of gluconeogenetic genes. The polypeptide is Transcription activator of gluconeogenesis CHGG_09150 (Chaetomium globosum (strain ATCC 6205 / CBS 148.51 / DSM 1962 / NBRC 6347 / NRRL 1970) (Soil fungus)).